Here is a 359-residue protein sequence, read N- to C-terminus: 3-dehydroquinate synthase (359 aa).

Residues 71 to 76, 105 to 109, 129 to 130, Lys-142, Lys-151, and 169 to 172 each bind NAD(+); these read DGEQFK, GVIGD, TT, and CLQT. Glu-184, His-247, and His-264 together coordinate Zn(2+).

This sequence belongs to the sugar phosphate cyclases superfamily. Dehydroquinate synthase family. Co(2+) is required as a cofactor. Zn(2+) serves as cofactor. Requires NAD(+) as cofactor.

Its subcellular location is the cytoplasm. The enzyme catalyses 7-phospho-2-dehydro-3-deoxy-D-arabino-heptonate = 3-dehydroquinate + phosphate. It functions in the pathway metabolic intermediate biosynthesis; chorismate biosynthesis; chorismate from D-erythrose 4-phosphate and phosphoenolpyruvate: step 2/7. Its function is as follows. Catalyzes the conversion of 3-deoxy-D-arabino-heptulosonate 7-phosphate (DAHP) to dehydroquinate (DHQ). The chain is 3-dehydroquinate synthase from Shewanella sp. (strain MR-4).